A 217-amino-acid polypeptide reads, in one-letter code: GTP cyclohydrolase 1 (217 aa).

Zn(2+)-binding residues include cysteine 108, histidine 111, and cysteine 179.

This sequence belongs to the GTP cyclohydrolase I family. In terms of assembly, toroid-shaped homodecamer, composed of two pentamers of five dimers.

The enzyme catalyses GTP + H2O = 7,8-dihydroneopterin 3'-triphosphate + formate + H(+). It functions in the pathway cofactor biosynthesis; 7,8-dihydroneopterin triphosphate biosynthesis; 7,8-dihydroneopterin triphosphate from GTP: step 1/1. This is GTP cyclohydrolase 1 from Shewanella denitrificans (strain OS217 / ATCC BAA-1090 / DSM 15013).